Reading from the N-terminus, the 230-residue chain is 7-cyano-7-deazaguanine synthase (230 aa).

9–19 (LSGGLDSATTA) contributes to the ATP binding site. Zn(2+) is bound by residues C190, C198, C201, and C204.

This sequence belongs to the QueC family. It depends on Zn(2+) as a cofactor.

The catalysed reaction is 7-carboxy-7-deazaguanine + NH4(+) + ATP = 7-cyano-7-deazaguanine + ADP + phosphate + H2O + H(+). Its pathway is purine metabolism; 7-cyano-7-deazaguanine biosynthesis. Catalyzes the ATP-dependent conversion of 7-carboxy-7-deazaguanine (CDG) to 7-cyano-7-deazaguanine (preQ(0)). This Microcystis aeruginosa (strain NIES-843 / IAM M-2473) protein is 7-cyano-7-deazaguanine synthase.